The following is a 100-amino-acid chain: Urease subunit gamma 1 (100 aa).

The protein belongs to the urease gamma subunit family. Heterotrimer of UreA (gamma), UreB (beta) and UreC (alpha) subunits. Three heterotrimers associate to form the active enzyme.

The protein resides in the cytoplasm. The enzyme catalyses urea + 2 H2O + H(+) = hydrogencarbonate + 2 NH4(+). Its pathway is nitrogen metabolism; urea degradation; CO(2) and NH(3) from urea (urease route): step 1/1. Functionally, disruption of the ure1 gene cluster suggests that it protects brucellae during their passage through the stomach. The major route of infection in human brucellosis is oral. This chain is Urease subunit gamma 1, found in Brucella abortus (strain 2308).